Consider the following 508-residue polypeptide: Rhamnogalacturonan I rhamnosyltransferase 1 (508 aa).

A helical; Signal-anchor for type II membrane protein membrane pass occupies residues 41 to 63; it reads LWMIRAVTVLLLWSCFVHLMALG. Asparagine 136, asparagine 202, and asparagine 223 each carry an N-linked (GlcNAc...) asparagine glycan. Substrate is bound at residue 277-279; sequence HLR. Asparagine 391 carries N-linked (GlcNAc...) asparagine glycosylation.

The protein belongs to the glycosyltransferase GT106 family. Highly expressed in siliques. Expressed in stems and flowers. Expressed at low levels in roots and rosette leaves.

The protein localises to the golgi apparatus membrane. The enzyme catalyses alpha-D-galacturonosyl-[(1-&gt;2)-alpha-L-rhamnosyl-(1-&gt;4)-alpha-D-galacturonosyl](n) + UDP-beta-L-rhamnose = [(1-&gt;2)-alpha-L-rhamnosyl-(1-&gt;4)-alpha-D-galacturonosyl](n+1) + UDP + H(+). It functions in the pathway glycan metabolism; pectin biosynthesis. In terms of biological role, glycosyltransferase involved in the formation of rhamnogalacturonan I (RG-I) oligosaccharides in the seed coat mucilage, which is a specialized cell wall with abundant RG-I. Transfers the rhamnose residue from UDP-beta-L-rhamnose to RG-I oligosaccharides. Prefers RG-I oligosaccharides with a degree of polymerization of 5 or larger than 5. Does not act on oligosaccharides with a degree of polymerization of 4 or smaller than 4. Does not require metal ions for its activity. The protein is Rhamnogalacturonan I rhamnosyltransferase 1 of Arabidopsis thaliana (Mouse-ear cress).